A 932-amino-acid chain; its full sequence is RNA-binding protein 12 (932 aa).

The tract at residues 96-116 is disordered; sequence DIPPANASRSGPPPSSGMSSR. Residues 98–116 are compositionally biased toward low complexity; that stretch reads PPANASRSGPPPSSGMSSR. One can recognise an RRM 1 domain in the interval 304–379; it reads LYVSVHGMPF…RYVEVSPATE (76 aa). A phosphoserine mark is found at Ser-352 and Ser-375. Composition is skewed to polar residues over residues 392-401 and 408-417; these read KQNMGPSGQT and LPRSKSPSGQ. Positions 392–424 are disordered; that stretch reads KQNMGPSGQTHPPPQTLPRSKSPSGQKRSRSRS. A phosphoserine mark is found at Ser-420, Ser-422, and Ser-424. An RRM 2 domain is found at 430-507; the sequence is FCVYLKGLPF…RFIQVHPITK (78 aa). The residue at position 525 (Ser-525) is a Phosphoserine. The segment covering 717–734 has biased composition (low complexity); it reads NGPPFNFPGNFGGSNAFG. The disordered stretch occupies residues 717 to 853; sequence NGPPFNFPGN…PGFASSSGKP (137 aa). Positions 783–811 are enriched in gly residues; that stretch reads SGFGGGPQNFGNGPGSLGGPPGFGSGPPG. Positions 824 to 836 are enriched in pro residues; the sequence is AFGPGPGPGPGPG. The region spanning 856 to 932 is the RRM 3 domain; sequence TVIKVQNMPF…GSRKVKLVLG (77 aa).

It localises to the nucleus. In Homo sapiens (Human), this protein is RNA-binding protein 12 (RBM12).